Reading from the N-terminus, the 136-residue chain is MSSVESSPISRYEDEVFPLSFSNVAFEPPMLSHSPDRSTYADDFSQSYQQELLTFPLSYPIVDESECTHTKDKTDSNIITSTEDDCMFDMEFNGNAASAVAAASKESNSASGFAFASNDAFANVAQQNYRLWLSSV.

The ATG9-binding stretch occupies residues 127-136 (QNYRLWLSSV).

As to quaternary structure, interacts with ATG9.

It localises to the preautophagosomal structure membrane. Involved in both selective and non-selective autophagy. Does not appear to play a role in determining the size of autophagosomes, but rather influences their formation rate. With ATG9, plays a role in the delivery of donor membrane to expanding phagophore. This is Autophagy-related protein 41 from Saccharomyces cerevisiae (strain ATCC 204508 / S288c) (Baker's yeast).